We begin with the raw amino-acid sequence, 241 residues long: Large ribosomal subunit protein uL3 (241 aa).

The interval 140–168 (SHRSIGSTGGRQDPGKTFKNKKMPGHMGD) is disordered. Position 151 is an N5-methylglutamine (Gln-151).

The protein belongs to the universal ribosomal protein uL3 family. In terms of assembly, part of the 50S ribosomal subunit. Forms a cluster with proteins L14 and L19. Methylated by PrmB.

In terms of biological role, one of the primary rRNA binding proteins, it binds directly near the 3'-end of the 23S rRNA, where it nucleates assembly of the 50S subunit. This is Large ribosomal subunit protein uL3 from Azorhizobium caulinodans (strain ATCC 43989 / DSM 5975 / JCM 20966 / LMG 6465 / NBRC 14845 / NCIMB 13405 / ORS 571).